A 555-amino-acid polypeptide reads, in one-letter code: Formate--tetrahydrofolate ligase (555 aa).

ATP is bound at residue 65–72 (TPAGEGKS).

Belongs to the formate--tetrahydrofolate ligase family.

The catalysed reaction is (6S)-5,6,7,8-tetrahydrofolate + formate + ATP = (6R)-10-formyltetrahydrofolate + ADP + phosphate. It participates in one-carbon metabolism; tetrahydrofolate interconversion. In Staphylococcus aureus (strain USA300), this protein is Formate--tetrahydrofolate ligase.